Here is a 617-residue protein sequence, read N- to C-terminus: ATP-dependent RNA helicase DBP1 (617 aa).

Positions 1–90 (MADLPQKVSN…TSANYNRGGS (90 aa)) are disordered. Polar residues predominate over residues 7–17 (KVSNLSINNKE). The segment covering 38–58 (PSFERSTPKQEDKVTGGDFFR) has biased composition (basic and acidic residues). The segment covering 79-90 (GGTSANYNRGGS) has biased composition (polar residues). A Q motif motif is present at residues 154–182 (LDFSSPPLDELLMENIKLASFTKPTPVQK). A Helicase ATP-binding domain is found at 185–374 (IPIVTKGRDL…RDFLDNYIFL (190 aa)). Position 198-205 (198-205 (AQTGSGKT)) interacts with ATP. The DEAD box signature appears at 318–321 (DEAD). Residues 385 to 545 (NITQRILYVD…EVPTFLSDLS (161 aa)) form the Helicase C-terminal domain. The segment at 542–617 (SDLSRQNSRG…GYGNSNASWW (76 aa)) is disordered. The segment covering 580–594 (FGSTRPRNTGTSNWG) has biased composition (polar residues).

This sequence belongs to the DEAD box helicase family. DDX3/DED1 subfamily.

Its subcellular location is the cytoplasm. The catalysed reaction is ATP + H2O = ADP + phosphate + H(+). ATP-binding RNA helicase involved in translation initiation. Remodels RNA in response to ADP and ATP concentrations by facilitating disruption, but also formation of RNA duplexes. Redundant to DED1, may be required in conditions in which DED1 expression is decreased. The protein is ATP-dependent RNA helicase DBP1 (DBP1) of Saccharomyces cerevisiae (strain YJM789) (Baker's yeast).